Here is a 593-residue protein sequence, read N- to C-terminus: V-type sodium ATPase catalytic subunit A (593 aa).

G232–T239 contributes to the ATP binding site.

Belongs to the ATPase alpha/beta chains family.

The enzyme catalyses 4 Na(+)(in) + ATP + H2O = 4 Na(+)(out) + ADP + phosphate + H(+). Its function is as follows. Involved in ATP-driven sodium extrusion. The protein is V-type sodium ATPase catalytic subunit A (ntpA) of Enterococcus hirae (strain ATCC 9790 / DSM 20160 / JCM 8729 / LMG 6399 / NBRC 3181 / NCIMB 6459 / NCDO 1258 / NCTC 12367 / WDCM 00089 / R).